Consider the following 216-residue polypeptide: Ribonuclease T (216 aa).

An Exonuclease domain is found at 28-202 (VVVDVETGGF…YDTEQTARLF (175 aa)). Mg(2+) is bound by residues aspartate 31, glutamate 33, histidine 189, and aspartate 194. Residue histidine 189 is the Proton donor/acceptor of the active site.

It belongs to the RNase T family. As to quaternary structure, homodimer. It depends on Mg(2+) as a cofactor.

In terms of biological role, trims short 3' overhangs of a variety of RNA species, leaving a one or two nucleotide 3' overhang. Responsible for the end-turnover of tRNA: specifically removes the terminal AMP residue from uncharged tRNA (tRNA-C-C-A). Also appears to be involved in tRNA biosynthesis. This chain is Ribonuclease T, found in Xanthomonas campestris pv. campestris (strain 8004).